A 381-amino-acid polypeptide reads, in one-letter code: tRNA pseudouridine synthase D (381 aa).

Catalysis depends on Asp81, which acts as the Nucleophile. The 176-residue stretch at 160-335 (GMPNYFGSQR…TLGSRRFFWV (176 aa)) folds into the TRUD domain.

It belongs to the pseudouridine synthase TruD family.

The catalysed reaction is uridine(13) in tRNA = pseudouridine(13) in tRNA. Functionally, responsible for synthesis of pseudouridine from uracil-13 in transfer RNAs. This chain is tRNA pseudouridine synthase D, found in Helicobacter pylori (strain ATCC 700392 / 26695) (Campylobacter pylori).